A 158-amino-acid chain; its full sequence is SsrA-binding protein (158 aa).

This sequence belongs to the SmpB family.

The protein resides in the cytoplasm. In terms of biological role, required for rescue of stalled ribosomes mediated by trans-translation. Binds to transfer-messenger RNA (tmRNA), required for stable association of tmRNA with ribosomes. tmRNA and SmpB together mimic tRNA shape, replacing the anticodon stem-loop with SmpB. tmRNA is encoded by the ssrA gene; the 2 termini fold to resemble tRNA(Ala) and it encodes a 'tag peptide', a short internal open reading frame. During trans-translation Ala-aminoacylated tmRNA acts like a tRNA, entering the A-site of stalled ribosomes, displacing the stalled mRNA. The ribosome then switches to translate the ORF on the tmRNA; the nascent peptide is terminated with the 'tag peptide' encoded by the tmRNA and targeted for degradation. The ribosome is freed to recommence translation, which seems to be the essential function of trans-translation. The polypeptide is SsrA-binding protein (Caldicellulosiruptor saccharolyticus (strain ATCC 43494 / DSM 8903 / Tp8T 6331)).